The following is a 900-amino-acid chain: UPF0182 protein Ppro_3567 (900 aa).

7 helical membrane passes run 15–35 (FFPLLILVSVLLSLISYLLNL), 60–80 (GAGLLFGGLLFLFVQINLHVA), 112–132 (VSMLVSFVLALLAGNLGAMKW), 174–194 (FIILAAAALATAVYYVRGGIL), 210–230 (LAVLVGIFACAVAAGFYLDSF), 257–277 (VLTFLTPLAGAMLAIGIWKGV), and 282–302 (LLAPAIVVALYMLGIRVYPGV).

The protein belongs to the UPF0182 family.

The protein localises to the cell membrane. The protein is UPF0182 protein Ppro_3567 of Pelobacter propionicus (strain DSM 2379 / NBRC 103807 / OttBd1).